We begin with the raw amino-acid sequence, 148 residues long: MSELTEEQIAEFKDAFVQFDKEGTGKIATRELGTLMRTLGQNPTEAELQDLIAEAENNNNGQLNFTEFCGIMAKQMRETDTEEEMREAFKIFDRDGDGFISPAELRFVMINLGEKVTDEEIDEMIREADFDGDGMINYEEFVWMISQK.

EF-hand domains are found at residues 7–42 (EQIAEFKDAFVQFDKEGTGKIATRELGTLMRTLGQN), 43–78 (PTEAELQDLIAEAENNNNGQLNFTEFCGIMAKQMRE), 80–115 (DTEEEMREAFKIFDRDGDGFISPAELRFVMINLGEK), and 116–148 (VTDEEIDEMIREADFDGDGMINYEEFVWMISQK). Ca(2+) is bound by residues aspartate 20, threonine 24, lysine 26, glutamate 31, asparagine 58, asparagine 60, glutamine 62, glutamate 67, aspartate 93, aspartate 95, aspartate 97, glutamate 104, aspartate 129, aspartate 131, aspartate 133, methionine 135, and glutamate 140.

The protein belongs to the calmodulin family.

May be involved in calcium-mediated signal transduction. The sequence is that of Calmodulin-related protein 97A (Acam) from Drosophila melanogaster (Fruit fly).